The sequence spans 235 residues: tRNA pseudouridine synthase B (235 aa).

The Nucleophile role is filled by aspartate 45.

It belongs to the pseudouridine synthase TruB family. Type 1 subfamily.

The catalysed reaction is uridine(55) in tRNA = pseudouridine(55) in tRNA. In terms of biological role, responsible for synthesis of pseudouridine from uracil-55 in the psi GC loop of transfer RNAs. The polypeptide is tRNA pseudouridine synthase B (Chlamydia abortus (strain DSM 27085 / S26/3) (Chlamydophila abortus)).